Here is a 348-residue protein sequence, read N- to C-terminus: Tetraacyldisaccharide 4'-kinase (348 aa).

Position 65-72 (65-72) interacts with ATP; the sequence is VAGGAGKT. Residues 89–117 are disordered; sequence PGIVSRGHGSREREARPVSADSTAQSVGD.

This sequence belongs to the LpxK family.

It catalyses the reaction a lipid A disaccharide + ATP = a lipid IVA + ADP + H(+). The protein operates within glycolipid biosynthesis; lipid IV(A) biosynthesis; lipid IV(A) from (3R)-3-hydroxytetradecanoyl-[acyl-carrier-protein] and UDP-N-acetyl-alpha-D-glucosamine: step 6/6. Transfers the gamma-phosphate of ATP to the 4'-position of a tetraacyldisaccharide 1-phosphate intermediate (termed DS-1-P) to form tetraacyldisaccharide 1,4'-bis-phosphate (lipid IVA). This is Tetraacyldisaccharide 4'-kinase from Leptothrix cholodnii (strain ATCC 51168 / LMG 8142 / SP-6) (Leptothrix discophora (strain SP-6)).